Here is a 162-residue protein sequence, read N- to C-terminus: E3 ubiquitin-protein ligase LAP (162 aa).

At 1–78 (MEGSDNTNTH…RWKCSFMYCN (78 aa)) the chain is on the cytoplasmic side. Residues 3–61 (GSDNTNTHCWICKDEYNVSTNFCNCKNEFKIVHKNCLEEWINFSHNTKCKICNGKYNIK) form an RING-CH-type zinc finger. Positions 11, 14, 25, 27, 35, 38, 51, and 54 each coordinate Zn(2+). The helical transmembrane segment at 79 to 99 (VPAICVSLICLLLLPLTILLV) threads the bilayer. Over 100–121 (KFNLKSMLENIENRDLIALISA) the chain is Lumenal. A helical membrane pass occupies residues 122–142 (MAYSLPCVVGFITVVHILIAL). Over 143-162 (YDYYLAAKSDNTTYQVYEYI) the chain is Cytoplasmic.

This sequence belongs to the poxviridae LAP protein family.

Its subcellular location is the host membrane. The protein localises to the host Golgi apparatus. It is found in the host trans-Golgi network membrane. It localises to the host early endosome membrane. It carries out the reaction S-ubiquitinyl-[E2 ubiquitin-conjugating enzyme]-L-cysteine + [acceptor protein]-L-lysine = [E2 ubiquitin-conjugating enzyme]-L-cysteine + N(6)-ubiquitinyl-[acceptor protein]-L-lysine.. Functionally, E3 ubiquitin-protein ligase which promotes ubiquitination and subsequent degradation of host MHC-I and CD4 molecules, presumably to prevent lysis of infected cells by cytotoxic T-lymphocytes and NK cell. Binds target molecules through transmembrane interaction. The result of this ubiquitination is the enhancement of the endocytosis of the target chain and the delivery to the lysosome, where it is proteolytically destroyed. The sequence is that of E3 ubiquitin-protein ligase LAP (LW010) from Lumpy skin disease virus (LSDV).